We begin with the raw amino-acid sequence, 310 residues long: 2-dehydropantoate 2-reductase (310 aa).

Residues 9-14 (GVGAIG) and Asn-100 each bind NADP(+). Asn-100 is a substrate binding site. The Proton donor role is filled by Lys-184. Substrate is bound by residues Asn-188, Asn-192, and Ser-259. Glu-270 is an NADP(+) binding site.

This sequence belongs to the ketopantoate reductase family.

The protein localises to the cytoplasm. It catalyses the reaction (R)-pantoate + NADP(+) = 2-dehydropantoate + NADPH + H(+). It participates in cofactor biosynthesis; (R)-pantothenate biosynthesis; (R)-pantoate from 3-methyl-2-oxobutanoate: step 2/2. Functionally, catalyzes the NADPH-dependent reduction of ketopantoate into pantoic acid. The sequence is that of 2-dehydropantoate 2-reductase from Aquifex aeolicus (strain VF5).